Reading from the N-terminus, the 688-residue chain is Elongation factor G (688 aa).

Residues 8 to 282 enclose the tr-type G domain; it reads ERTRNIGIMA…AVLDYLPAPT (275 aa). Residues 17–24, 81–85, and 135–138 contribute to the GTP site; these read AHIDAGKT, DTPGH, and NKMD.

It belongs to the TRAFAC class translation factor GTPase superfamily. Classic translation factor GTPase family. EF-G/EF-2 subfamily.

The protein localises to the cytoplasm. Catalyzes the GTP-dependent ribosomal translocation step during translation elongation. During this step, the ribosome changes from the pre-translocational (PRE) to the post-translocational (POST) state as the newly formed A-site-bound peptidyl-tRNA and P-site-bound deacylated tRNA move to the P and E sites, respectively. Catalyzes the coordinated movement of the two tRNA molecules, the mRNA and conformational changes in the ribosome. The chain is Elongation factor G from Clostridioides difficile (strain 630) (Peptoclostridium difficile).